Here is a 307-residue protein sequence, read N- to C-terminus: Potassium channel subfamily K member 7 (307 aa).

At 1–10 (MGSLKPWARY) the chain is on the cytoplasmic side. A helical transmembrane segment spans residues 11–31 (LLLLMAHLLAMGLGAVVLQAL). N-linked (GlcNAc...) asparagine glycosylation is present at asparagine 83. An intramembrane region (pore-forming) is located at residues 92–118 (LPSALLFTASILTTTGYGHMAPLSSGG). The chain crosses the membrane as a helical span at residues 120-140 (AFCVVYAALGLPASLALVAAL). Over 141-172 (RHCLLPVFSRPGDWVAIRWQLAPAQAALLQAA) the chain is Cytoplasmic. Residues 173-193 (GLGLLVACVFMLLPALVLWGV) traverse the membrane as a helical segment. Residues 199–227 (LLEAIYFCFGSLSTIGLGDLLPAHGRGLH) constitute an intramembrane region (pore-forming). Residues 233–253 (LGQFALLGYLLLGLLAMLLAV) traverse the membrane as a helical segment. Residues 254 to 307 (ETFSELPQVRAMVKFFGPSGSRTDEDQDGILGQDELALSTVLPDAPVLGPTTPA) are Cytoplasmic-facing.

Belongs to the two pore domain potassium channel (TC 1.A.1.8) family. As to quaternary structure, homodimer. Detected in embryo, eye, lung and liver. Weakly expressed in colon, testis, atria, kidney, intestine, bladder, uterus, ovary, salivary gland, thymus and brain stem. Not detected in brain, cerebellum, spinal cord, heart, ventricle, skeletal muscle, liver, placenta and pancreas. In the eye, highly expressed in the retinal ganglion cell layer and inner nuclear layer.

It localises to the membrane. In terms of biological role, probable potassium channel subunit. No channel activity observed in vitro as protein remains in the endoplasmic reticulum. May need to associate with an as yet unknown partner in order to reach the plasma membrane. This is Potassium channel subfamily K member 7 (Kcnk7) from Mus musculus (Mouse).